Here is a 372-residue protein sequence, read N- to C-terminus: Aminomethyltransferase (372 aa).

It belongs to the GcvT family. In terms of assembly, the glycine cleavage system is composed of four proteins: P, T, L and H.

The enzyme catalyses N(6)-[(R)-S(8)-aminomethyldihydrolipoyl]-L-lysyl-[protein] + (6S)-5,6,7,8-tetrahydrofolate = N(6)-[(R)-dihydrolipoyl]-L-lysyl-[protein] + (6R)-5,10-methylene-5,6,7,8-tetrahydrofolate + NH4(+). Functionally, the glycine cleavage system catalyzes the degradation of glycine. The polypeptide is Aminomethyltransferase (Streptomyces coelicolor (strain ATCC BAA-471 / A3(2) / M145)).